Consider the following 528-residue polypeptide: Tyrosine--tRNA ligase, cytoplasmic (528 aa).

Residue methionine 1 is modified to N-acetylmethionine. Glycine 2 carries the N-acetylglycine; in Tyrosine--tRNA ligase, cytoplasmic, N-terminally processed modification. Tyrosine 39 serves as a coordination point for L-tyrosine. Tyrosine 39 lines the trans-resveratrol pocket. Residues 44 to 52 carry the 'HIGH' region motif; the sequence is TTGKPHVAY. L-tyrosine contacts are provided by tyrosine 166, glutamine 170, aspartate 173, and glutamine 188. 2 residues coordinate trans-resveratrol: glutamine 170 and aspartate 173. Position 197 is an N6-acetyllysine (lysine 197). Serine 205 is modified (phosphoserine). Lysine 206 is modified (N6-acetyllysine). The short motif at 222 to 226 is the 'KMSKS' region element; that stretch reads KMSSS. The short motif at 242–247 is the Nuclear localization signal element; sequence KKKLKK. The segment at 339–363 is disordered; sequence AAYPDPSKQKPMAKGPAKNSEPEEV. Residues 364–468 form the tRNA-binding domain; that stretch reads IPSRLDIRVG…AGSAPGERVF (105 aa). Phosphoserine is present on serine 386. N6-acetyllysine occurs at positions 474, 482, and 490.

It belongs to the class-I aminoacyl-tRNA synthetase family. As to quaternary structure, homodimer. Interacts (when binding to resveratrol) with PARP1; interaction stimulates the poly-ADP-ribosyltransferase activity of PARP1.

It localises to the cytoplasm. Its subcellular location is the nucleus. It carries out the reaction tRNA(Tyr) + L-tyrosine + ATP = L-tyrosyl-tRNA(Tyr) + AMP + diphosphate + H(+). Its activity is regulated as follows. Resveratrol strongly inhibits the tyrosine--tRNA ligase activity. Tyrosine--tRNA ligase that catalyzes the attachment of tyrosine to tRNA(Tyr) in a two-step reaction: tyrosine is first activated by ATP to form Tyr-AMP and then transferred to the acceptor end of tRNA(Tyr). Also acts as a positive regulator of poly-ADP-ribosylation in the nucleus, independently of its tyrosine--tRNA ligase activity. Activity is switched upon resveratrol-binding: resveratrol strongly inhibits the tyrosine--tRNA ligase activity and promotes relocalization to the nucleus, where YARS1 specifically stimulates the poly-ADP-ribosyltransferase activity of PARP1. The chain is Tyrosine--tRNA ligase, cytoplasmic (YARS1) from Pongo abelii (Sumatran orangutan).